We begin with the raw amino-acid sequence, 89 residues long: Transcriptional regulator WhiB2 (89 aa).

The segment covering M1–P15 has biased composition (pro residues). A disordered region spans residues M1–R24. Residues L26–R83 enclose the 4Fe-4S Wbl-type domain. Residue C27 participates in [4Fe-4S] cluster binding. S42 carries the post-translational modification Phosphoserine. Positions 50, 53, and 59 each coordinate [4Fe-4S] cluster.

This sequence belongs to the WhiB family. [4Fe-4S] cluster is required as a cofactor. In terms of processing, may be phosphorylated, possibly on Ser-42. The cluster is degraded quickly in the presence of air. Upon cluster removal intramolecular disulfide bonds are formed. Post-translationally, the Fe-S cluster can be nitrosylated by nitric oxide (NO).

It is found in the cytoplasm. Functionally, acts as a transcriptional regulator. Probably redox-responsive. The apo- but not holo-form probably binds DNA. Its function is as follows. The apo-form functions as a chaperone, preventing aggregation or helping in correct refolding of a number of substrates; this activity does not require ATP or the ability to bind a Fe-S cluster. Chaperone activity is insensitive to the redox state of its cysteine residues. The apo-form has no protein disulfide reductase activity. The apo-form binds to its own promoter. This chain is Transcriptional regulator WhiB2 (whiB2), found in Mycobacterium tuberculosis (strain ATCC 25618 / H37Rv).